The following is a 55-amino-acid chain: Large ribosomal subunit protein bL33 (55 aa).

Belongs to the bacterial ribosomal protein bL33 family.

The protein is Large ribosomal subunit protein bL33 of Bartonella quintana (strain Toulouse) (Rochalimaea quintana).